A 98-amino-acid polypeptide reads, in one-letter code: NADH-ubiquinone oxidoreductase chain 4L (98 aa).

A run of 3 helical transmembrane segments spans residues 1–21 (MPYI…GMLI), 29–49 (SLLC…LTIL), and 61–81 (IILL…LVMV).

This sequence belongs to the complex I subunit 4L family. As to quaternary structure, core subunit of respiratory chain NADH dehydrogenase (Complex I) which is composed of 45 different subunits.

It localises to the mitochondrion inner membrane. It catalyses the reaction a ubiquinone + NADH + 5 H(+)(in) = a ubiquinol + NAD(+) + 4 H(+)(out). Core subunit of the mitochondrial membrane respiratory chain NADH dehydrogenase (Complex I) which catalyzes electron transfer from NADH through the respiratory chain, using ubiquinone as an electron acceptor. Part of the enzyme membrane arm which is embedded in the lipid bilayer and involved in proton translocation. The protein is NADH-ubiquinone oxidoreductase chain 4L (MT-ND4L) of Cephalopachus bancanus (Western tarsier).